The sequence spans 44 residues: Photosystem I reaction center subunit IX (44 aa).

A helical membrane pass occupies residues F9–I29.

The protein belongs to the PsaJ family.

The protein resides in the cellular thylakoid membrane. In terms of biological role, may help in the organization of the PsaE and PsaF subunits. The protein is Photosystem I reaction center subunit IX of Prochlorococcus marinus (strain MIT 9301).